We begin with the raw amino-acid sequence, 329 residues long: Malate dehydrogenase (329 aa).

Residue 12–18 (GAAGQIG) participates in NAD(+) binding. Residues R95 and R101 each contribute to the substrate site. NAD(+) contacts are provided by residues N108, Q115, and 132-134 (VGN). Positions 134 and 165 each coordinate substrate. H190 (proton acceptor) is an active-site residue.

The protein belongs to the LDH/MDH superfamily. MDH type 2 family.

The enzyme catalyses (S)-malate + NAD(+) = oxaloacetate + NADH + H(+). Functionally, catalyzes the reversible oxidation of malate to oxaloacetate. This chain is Malate dehydrogenase, found in Herminiimonas arsenicoxydans.